A 196-amino-acid chain; its full sequence is UPF0215 protein MM_1007 (196 aa).

The protein belongs to the UPF0215 family.

The sequence is that of UPF0215 protein MM_1007 from Methanosarcina mazei (strain ATCC BAA-159 / DSM 3647 / Goe1 / Go1 / JCM 11833 / OCM 88) (Methanosarcina frisia).